Here is a 445-residue protein sequence, read N- to C-terminus: UPF0210 protein SP_0239 (445 aa).

This sequence belongs to the UPF0210 family. In terms of assembly, homodimer.

The sequence is that of UPF0210 protein SP_0239 from Streptococcus pneumoniae serotype 4 (strain ATCC BAA-334 / TIGR4).